The following is a 592-amino-acid chain: Protein alan shepard (592 aa).

The disordered stretch occupies residues 1–68; that stretch reads MGGPHHQHQQ…ASVAAAPPTP (68 aa). Over residues 18 to 28 the composition is skewed to gly residues; sequence VGGGNGHGGGA. Positions 36-54 are enriched in polar residues; that stretch reads PNSQQLPPQMPRSQNYANG. Residues 55–64 are compositionally biased toward low complexity; it reads SSSAASVAAA. A phosphotyrosine mark is found at tyrosine 124 and tyrosine 140. Positions 162 to 224 are disordered; sequence PATTTYGQRV…AQNQNQQGGE (63 aa). The segment covering 176–224 has biased composition (low complexity); sequence SPSNTNSSSSSNTGSQSGTLSTSLSNTTNTNTTMGPNGTAQNQNQQGGE. RRM domains follow at residues 229–307 and 319–398; these read TNLY…IWVL and TNLY…FADG. The disordered stretch occupies residues 565–592; sequence PMTDSEQASTAASPDEAYTQYPHQAAPK.

Has a role in the perception of gravity. In Drosophila mojavensis (Fruit fly), this protein is Protein alan shepard.